We begin with the raw amino-acid sequence, 242 residues long: Beta-carotene ketolase (242 aa).

It carries out the reaction all-trans-beta-carotene + 2 AH2 + 2 O2 = echinenone + 2 A + 3 H2O. It catalyses the reaction echinenone + 2 AH2 + 2 O2 = canthaxanthin + 2 A + 3 H2O. It participates in carotenoid biosynthesis; astaxanthin biosynthesis. Functionally, converts beta-carotene to canthaxanthin via echinenone. The sequence is that of Beta-carotene ketolase from Paracoccus sp. (strain PC1) (Alcaligenes sp. (strain PC1)).